A 179-amino-acid polypeptide reads, in one-letter code: ATP synthase subunit delta (179 aa).

It belongs to the ATPase delta chain family. F-type ATPases have 2 components, F(1) - the catalytic core - and F(0) - the membrane proton channel. F(1) has five subunits: alpha(3), beta(3), gamma(1), delta(1), epsilon(1). F(0) has three main subunits: a(1), b(2) and c(10-14). The alpha and beta chains form an alternating ring which encloses part of the gamma chain. F(1) is attached to F(0) by a central stalk formed by the gamma and epsilon chains, while a peripheral stalk is formed by the delta and b chains.

The protein localises to the cell inner membrane. Its function is as follows. F(1)F(0) ATP synthase produces ATP from ADP in the presence of a proton or sodium gradient. F-type ATPases consist of two structural domains, F(1) containing the extramembraneous catalytic core and F(0) containing the membrane proton channel, linked together by a central stalk and a peripheral stalk. During catalysis, ATP synthesis in the catalytic domain of F(1) is coupled via a rotary mechanism of the central stalk subunits to proton translocation. Functionally, this protein is part of the stalk that links CF(0) to CF(1). It either transmits conformational changes from CF(0) to CF(1) or is implicated in proton conduction. This chain is ATP synthase subunit delta, found in Burkholderia pseudomallei (strain 1710b).